We begin with the raw amino-acid sequence, 338 residues long: DNA-directed RNA polymerase subunit alpha (338 aa).

An alpha N-terminal domain (alpha-NTD) region spans residues 1–234; sequence MIHKNWAELI…DQLSIFVNFD (234 aa). An alpha C-terminal domain (alpha-CTD) region spans residues 250-338; sequence FNPLLLKKVD…DLAKKFEDAF (89 aa).

It belongs to the RNA polymerase alpha chain family. Homodimer. The RNAP catalytic core consists of 2 alpha, 1 beta, 1 beta' and 1 omega subunit. When a sigma factor is associated with the core the holoenzyme is formed, which can initiate transcription.

It carries out the reaction RNA(n) + a ribonucleoside 5'-triphosphate = RNA(n+1) + diphosphate. DNA-dependent RNA polymerase catalyzes the transcription of DNA into RNA using the four ribonucleoside triphosphates as substrates. This chain is DNA-directed RNA polymerase subunit alpha, found in Ruegeria pomeroyi (strain ATCC 700808 / DSM 15171 / DSS-3) (Silicibacter pomeroyi).